The following is a 237-amino-acid chain: Demethylmenaquinone methyltransferase (237 aa).

S-adenosyl-L-methionine is bound by residues Thr58, Asp79, and 106 to 107 (NA).

The protein belongs to the class I-like SAM-binding methyltransferase superfamily. MenG/UbiE family.

It carries out the reaction a 2-demethylmenaquinol + S-adenosyl-L-methionine = a menaquinol + S-adenosyl-L-homocysteine + H(+). It functions in the pathway quinol/quinone metabolism; menaquinone biosynthesis; menaquinol from 1,4-dihydroxy-2-naphthoate: step 2/2. Methyltransferase required for the conversion of demethylmenaquinol (DMKH2) to menaquinol (MKH2). In Bacillus mycoides (strain KBAB4) (Bacillus weihenstephanensis), this protein is Demethylmenaquinone methyltransferase.